The following is a 338-amino-acid chain: Ketol-acid reductoisomerase (NADP(+)) (338 aa).

The KARI N-terminal Rossmann domain occupies 1 to 181; sequence MKVFYDKDCD…GGGRTGIIET (181 aa). Residues 24–27, Arg47, Ser50, Thr52, and 82–85 contribute to the NADP(+) site; these read YGSQ and DEFQ. His107 is an active-site residue. Gly133 contacts NADP(+). The 146-residue stretch at 182 to 327 folds into the KARI C-terminal knotted domain; sequence TFKDETETDL…EKLRSMMPWI (146 aa). The Mg(2+) site is built by Asp190, Glu194, Glu226, and Glu230. Ser251 is a substrate binding site.

The protein belongs to the ketol-acid reductoisomerase family. Mg(2+) serves as cofactor.

The catalysed reaction is (2R)-2,3-dihydroxy-3-methylbutanoate + NADP(+) = (2S)-2-acetolactate + NADPH + H(+). It carries out the reaction (2R,3R)-2,3-dihydroxy-3-methylpentanoate + NADP(+) = (S)-2-ethyl-2-hydroxy-3-oxobutanoate + NADPH + H(+). The protein operates within amino-acid biosynthesis; L-isoleucine biosynthesis; L-isoleucine from 2-oxobutanoate: step 2/4. It participates in amino-acid biosynthesis; L-valine biosynthesis; L-valine from pyruvate: step 2/4. Its function is as follows. Involved in the biosynthesis of branched-chain amino acids (BCAA). Catalyzes an alkyl-migration followed by a ketol-acid reduction of (S)-2-acetolactate (S2AL) to yield (R)-2,3-dihydroxy-isovalerate. In the isomerase reaction, S2AL is rearranged via a Mg-dependent methyl migration to produce 3-hydroxy-3-methyl-2-ketobutyrate (HMKB). In the reductase reaction, this 2-ketoacid undergoes a metal-dependent reduction by NADPH to yield (R)-2,3-dihydroxy-isovalerate. The polypeptide is Ketol-acid reductoisomerase (NADP(+)) (Pseudomonas syringae pv. tomato (strain ATCC BAA-871 / DC3000)).